We begin with the raw amino-acid sequence, 209 residues long: Large ribosomal subunit protein uL3 (209 aa).

The protein belongs to the universal ribosomal protein uL3 family. As to quaternary structure, part of the 50S ribosomal subunit. Forms a cluster with proteins L14 and L19.

One of the primary rRNA binding proteins, it binds directly near the 3'-end of the 23S rRNA, where it nucleates assembly of the 50S subunit. This Brevibacillus brevis (strain 47 / JCM 6285 / NBRC 100599) protein is Large ribosomal subunit protein uL3.